Reading from the N-terminus, the 424-residue chain is Arogenate dehydratase 1 (424 aa).

A chloroplast-targeting transit peptide spans 1-52; the sequence is MQSLTPSSGVNLKSIIRKTSLPPGQTRFITGRVIKCGYQVDSANTVNTAGAP. A Prephenate dehydratase domain is found at 131-308; that stretch reads RVAYQGVPGA…NVTRFVMLAR (178 aa). The 92-residue stretch at 321-412 folds into the ACT domain; that stretch reads TSIVFAHEGT…SFLRVLGSYP (92 aa).

In terms of tissue distribution, mostly expressed in flowers, especially in petals (corollas and tubes), and, at low levels, in roots, stems, leaves, pistils, stamens, ovaries and sepals.

It is found in the plastid. Its subcellular location is the chloroplast stroma. It catalyses the reaction L-arogenate + H(+) = L-phenylalanine + CO2 + H2O. The protein operates within amino-acid biosynthesis; L-phenylalanine biosynthesis; L-phenylalanine from L-arogenate: step 1/1. Its function is as follows. Converts L-arogenate produced from the shikimate-chorismate pathway into phenylalanine (Phe). Involved in floral volatile benzenoids and phenylpropanoids (FVBP) production. The chain is Arogenate dehydratase 1 from Petunia hybrida (Petunia).